The chain runs to 240 residues: Membrane-spanning 4-domains subfamily A member 15 (240 aa).

The next 4 helical transmembrane spans lie at 73-93, 100-120, 144-164, and 173-193; these read VLGT…SVLL, VGIF…FIIS, ILSV…FGVT, and LAVL…AMHF.

It belongs to the MS4A family.

Its subcellular location is the membrane. In terms of biological role, may be involved in signal transduction as a component of a multimeric receptor complex. In Homo sapiens (Human), this protein is Membrane-spanning 4-domains subfamily A member 15 (MS4A15).